The sequence spans 662 residues: Biosynthetic arginine decarboxylase (662 aa).

K127 is subject to N6-(pyridoxal phosphate)lysine. A substrate-binding site is contributed by F307–Y317.

The protein belongs to the Orn/Lys/Arg decarboxylase class-II family. SpeA subfamily. In terms of assembly, homotetramer. Mg(2+) serves as cofactor. Pyridoxal 5'-phosphate is required as a cofactor.

It localises to the periplasm. It carries out the reaction L-arginine + H(+) = agmatine + CO2. It participates in amine and polyamine biosynthesis; agmatine biosynthesis; agmatine from L-arginine: step 1/1. Catalyzes the biosynthesis of agmatine from arginine. The polypeptide is Biosynthetic arginine decarboxylase (Shigella flexneri).